An 892-amino-acid polypeptide reads, in one-letter code: Dystroglycan 1 (892 aa).

The N-terminal stretch at 1 to 27 (MRMSAGLSLLLPLWGRTFLLLLSVAMA) is a signal peptide. The Extracellular portion of the chain corresponds to 28–750 (QSHWPSEAGR…SSEDDVYLHT (723 aa)). The required for laminin recognition stretch occupies residues 30–405 (HWPSEAGRDW…GQIRPTMTIP (376 aa)). Residues 46–68 (SMHSVLSDLHEAVPTVVGIPDGI) are O-glycosylated at one site. A glycan (N-linked (GlcNAc...) asparagine) is linked at Asn138. Cys179 and Cys261 are joined by a disulfide. The segment at 313-482 (ATPTPVTAIG…PPTRIRTTTS (170 aa)) is mucin-like domain. Residues Thr314, Thr316, and Thr376 are each glycosylated (O-linked (Man6P...) threonine). The segment at 378-497 (TLGPIQPTRV…GEPNQRPELK (120 aa)) is disordered. Positions 410–444 (PTAVATPPTTTTKKPRVSTPKPATPSTDSSTTTTR) are enriched in low complexity. Residues 460–482 (TTKAPITRLETASPPTRIRTTTS) form an O-glycosylated at seven sites with GalNAc region. The Peptidase S72 domain occupies 600–709 (RAPARFKAKF…SSIAVTGSGS (110 aa)). N-linked (GlcNAc...) asparagine glycosylation is found at Asn638, Asn646, and Asn658. Residues Cys666 and Cys710 are joined by a disulfide bond. Residues 721–742 (PRRVPSEVPSTDVPDRDPEKSS) form a disordered region. Residues 733 to 742 (VPDRDPEKSS) are compositionally biased toward basic and acidic residues. Residues 751 to 771 (VIPAVVVAAILLIAGIIAMIC) traverse the membrane as a helical segment. Residues 772–892 (YRKKRKGKLT…YRSPPPYVPP (121 aa)) lie on the Cytoplasmic side of the membrane. The short motif at 773–779 (RKKRKGK) is the Nuclear localization signal element. The residue at position 787 (Thr787) is a Phosphothreonine. Residues 816 to 892 (LQEEKAPLPP…YRSPPPYVPP (77 aa)) form a required for interaction with CAV3 region. The tract at residues 820-892 (KAPLPPPEYP…YRSPPPYVPP (73 aa)) is disordered. The span at 829-843 (PNQSVPETTPLNQDT) shows a compositional bias: polar residues. Over residues 856–867 (NAPPYQPPPPFT) the composition is skewed to pro residues. Residues 877 to 892 (PKNMTPYRSPPPYVPP) form a required for binding DMD and UTRN region. A PPXY motif motif is present at residues 886 to 889 (PPPY). Tyr889 carries the post-translational modification Phosphotyrosine; by SRC.

In terms of assembly, monomer. Heterodimer of alpha- and beta-dystroglycan subunits which are the central components of the dystrophin-glycoprotein complex. This complex then can form a dystrophin-associated glycoprotein complex (DGC) which is composed of three subcomplexes: a cytoplasmic complex comprised of DMD (or UTRN), DTNA and a number of syntrophins, such as SNTB1, SNTB2, SNTG1 and SNTG2, the transmembrane dystroglycan complex, and the sarcoglycan-sarcospan complex. Interacts (via the N-terminal of alphaDAG1) with LARGE1; the interaction enhances laminin binding. Interacts with SGCD. Interacts with AGR2 and AGR3. Interacts (betaDAG1) with DMD; the interaction is inhibited by phosphorylation on the PPXY motif. Interacts (betaDAG1, via its PPXY motif) with UTRN (via its WWW and ZZ domains); the interaction is inhibited by phosphorylation on the PPXY motif. Interacts (betaDAG1, via its phosphorylated PPXY motif) with the SH2 domain-containing proteins, FYN, CSK, NCK and SHC. Interacts (betaDAG1) with CAV3 (via a central WW-like domain); the interaction disrupts the binding of DMD. BetaDAG1 directly interacts with ANK3, but not with ANK2; this interaction does not interfere with DMD-binding and is required for retention at costameres. Identified in a dystroglycan complex that contains at least PRX, DRP2, UTRN, DMD and DAG1. Interacts with POMGNT1. BetaDAG1 interacts with CD93. Post-translationally, O-glycosylated. POMGNT1 catalyzes the initial addition of N-acetylglucosamine, giving rise to the GlcNAc(beta1-2)Man(alpha1-)O-Ser/Thr moiety and thus providing the necessary basis for the addition of further carbohydrate moieties. Heavily O-glycosylated comprising of up to two thirds of its mass and the carbohydrate composition differs depending on tissue type. Mucin-type O-glycosylation is important for ligand binding activity. O-mannosylation is found in high abundance in both brain and muscle where the most abundant glycan is Sia-alpha-2-3-Gal-beta-1-4-Glc-NAc-beta-1-2-Man. In muscle, glycosylation on Thr-314, Thr-316 and Thr-376 by a phosphorylated O-mannosyl glycan with the structure 2-(N-acetylamido)-2-deoxygalactosyl-beta-1,3-2-(N-acetylamido)-2-deoxyglucosyl-beta-1,4-6-phosphomannose is mediated by like-acetylglucosaminyltransferase (LARGE1) protein amd is required for laminin binding. O-glycosylated in the N-terminal region with a core 1 or possibly core 8 glycan. The brain form displays a unique glycosylation pattern which is absent in other tissues; this form shows enhanced binding to laminin LAMA5 compared to the skeletal muscle form. N-glycosylated. In terms of processing, autolytic cleavage produces the alpha and beta subunits. In cutaneous cells, as well as in certain pathological conditions, shedding of beta-dystroglycan can occur releasing a peptide of about 30 kDa. Post-translationally, SRC-mediated phosphorylation of the PPXY motif of the beta subunit recruits SH2 domain-containing proteins, but inhibits binding to WWW domain-containing proteins, DMD and UTRN. This phosphorylation also inhibits nuclear entry.

The protein localises to the secreted. Its subcellular location is the extracellular space. It localises to the cell membrane. The protein resides in the cytoplasm. It is found in the cytoskeleton. The protein localises to the nucleus. Its subcellular location is the nucleoplasm. It localises to the sarcolemma. The protein resides in the postsynaptic cell membrane. Its function is as follows. The dystroglycan complex is involved in a number of processes including laminin and basement membrane assembly, sarcolemmal stability, cell survival, peripheral nerve myelination, nodal structure, cell migration, and epithelial polarization. Functionally, extracellular peripheral glycoprotein that acts as a receptor for extracellular matrix proteins containing laminin-G domains. Receptor for laminin-2 (LAMA2) and agrin in peripheral nerve Schwann cells. Also acts as a receptor for laminin LAMA5. In terms of biological role, transmembrane protein that plays important roles in connecting the extracellular matrix to the cytoskeleton. Acts as a cell adhesion receptor in both muscle and non-muscle tissues. Receptor for both DMD and UTRN and, through these interactions, scaffolds axin to the cytoskeleton. Also functions in cell adhesion-mediated signaling and implicated in cell polarity. The polypeptide is Dystroglycan 1 (Canis lupus familiaris (Dog)).